A 316-amino-acid chain; its full sequence is Protoheme IX farnesyltransferase (316 aa).

Helical transmembrane passes span 34 to 54 (VMSL…GHIN), 55 to 75 (PFIG…SGAL), 95 to 115 (IPAG…LSAF), 118 to 138 (IILG…TIFF), 155 to 175 (IVIG…CVTG), 182 to 202 (IVLF…LALF), 228 to 250 (IVIY…FASL), 254 to 273 (AFAT…VLRM), and 287 to 307 (FAFS…DYAI).

Belongs to the UbiA prenyltransferase family. Protoheme IX farnesyltransferase subfamily.

It localises to the cell inner membrane. It catalyses the reaction heme b + (2E,6E)-farnesyl diphosphate + H2O = Fe(II)-heme o + diphosphate. The protein operates within porphyrin-containing compound metabolism; heme O biosynthesis; heme O from protoheme: step 1/1. Functionally, converts heme B (protoheme IX) to heme O by substitution of the vinyl group on carbon 2 of heme B porphyrin ring with a hydroxyethyl farnesyl side group. In Rhizobium meliloti (strain 1021) (Ensifer meliloti), this protein is Protoheme IX farnesyltransferase.